A 252-amino-acid polypeptide reads, in one-letter code: Large ribosomal subunit protein uL4 (252 aa).

It belongs to the universal ribosomal protein uL4 family. Part of the 50S ribosomal subunit.

One of the primary rRNA binding proteins, this protein initially binds near the 5'-end of the 23S rRNA. It is important during the early stages of 50S assembly. It makes multiple contacts with different domains of the 23S rRNA in the assembled 50S subunit and ribosome. Functionally, forms part of the polypeptide exit tunnel. This chain is Large ribosomal subunit protein uL4, found in Methanocaldococcus jannaschii (strain ATCC 43067 / DSM 2661 / JAL-1 / JCM 10045 / NBRC 100440) (Methanococcus jannaschii).